The primary structure comprises 338 residues: UPF0252 protein PF1496 (338 aa).

A helical transmembrane segment spans residues 100–120 (ILSMLFLVFILFPAFTSHIWS).

Belongs to the UPF0252 family.

It is found in the membrane. The polypeptide is UPF0252 protein PF1496 (Pyrococcus furiosus (strain ATCC 43587 / DSM 3638 / JCM 8422 / Vc1)).